The following is a 374-amino-acid chain: Polar flagellin E (374 aa).

The stretch at 102–126 (SHEQDDRKSLQQEVIALQDELDRVA) forms a coiled coil.

It belongs to the bacterial flagellin family. Heteromer of multiple flagellin subunits including FlaA, FlaB/D, FlaC, FlaE and FlaF.

It localises to the secreted. It is found in the bacterial flagellum. Functionally, flagellin is the subunit protein which polymerizes to form the filaments of bacterial flagella. In Vibrio parahaemolyticus serotype O3:K6 (strain RIMD 2210633), this protein is Polar flagellin E (flaE).